The chain runs to 387 residues: MALTPDTVSSKLATLNETQESITGIAHWVMFHKRYADEIVQIWLEALYESSSNKKLLLLYLLNEVVQQSRVKKISEYIDAVSPYVVNSVADAYASVPASIKTKIKYVFDVWCQRGIFSKEILLSLQERFNNAENSGHSNYYPVGPPEWAPYTRLMTQTSLYAKSAHSTKTVVDALYKSYLEKQSDYSELLDNYKKQLNKASESCKGNYQACIESRSTLITSLESLIEEQKKLLSEEEESLKSVESIISNLENKESTTATSTLTDAGFGDKSSTAGKHNVETTSPPSSSPNSDDAYSPQVDSYSPSINSVPYTSNIVENPSEDNLSPLPPPASGPYSQEEEETSLFKSQRKEENEEESKELPEDSDIYGKDSSPSSDDSSAAGLYGDS.

The 133-residue stretch at 1-133 (MALTPDTVSS…SLQERFNNAE (133 aa)) folds into the CID domain. A coiled-coil region spans residues 177 to 255 (KSYLEKQSDY…IISNLENKES (79 aa)). Residues 257-387 (TATSTLTDAG…SSAAGLYGDS (131 aa)) form a disordered region. Low complexity predominate over residues 283–297 (SPPSSSPNSDDAYSP). Over residues 298–323 (QVDSYSPSINSVPYTSNIVENPSEDN) the composition is skewed to polar residues. The span at 353 to 365 (NEEESKELPEDSD) shows a compositional bias: acidic residues. Residues 370 to 379 (DSSPSSDDSS) are compositionally biased toward low complexity. Position 372 is a phosphoserine (Ser-372).

Belongs to the UPF0400 (RTT103) family.

The sequence is that of UPF0400 protein C337.03 from Schizosaccharomyces pombe (strain 972 / ATCC 24843) (Fission yeast).